Consider the following 612-residue polypeptide: MFRTAVMMAASLALTGAVVAHAYYLKHQFYPTVVYLTKSSPSMAVLYIQAFVLVFLLGKVMGKVFFGQLRAAEMEHLLERSWYAVTETCLAFTVFRDDFSPRFVALFTLLLFLKCFHWLAEDRVDFMERSPNISWLFHCRIVSLMFLLGILDFLFVSHAYHSILTRGASVQLVFGFEYAILMTMVLTIFIKYVLHSVDLQSENPWDNKAVYMLYTELFTGFIKVLLYMAFMTIMIKVHTFPLFAIRPMYLAMRQFKKAVTDAIMSRRAIRNMNTLYPDATPEELQAVDNVCIICREEMVTGAKRLPCNHIFHTSCLRSWFQRQQTCPTCRMDVLRASLPAQSPPPPEPADQGPPPAPHPQPLLPQPPNFPQGLLPPFPPGMFPLWPPMGPFPPVPPPPSSGEAAAPPPTSTAVSRPSGAATTTAAGTSTSAPAPGSVPGPEAGPAPGFPFPPPWMGMPLPPPFAFPPMPVPPAGFAGLTPEELRALEGHERQHLEARLQSLRNIHTLLDAAMLQINQYLTVLASLGPPRPATSVNPTEETASTVVSAAPSTSAPSSEAPTPSPGASPPIPEAEKPPAPESVGIVEELPEDGEPDAAELRRRRLQKLESPVAH.

The Cytoplasmic segment spans residues Met1–Thr4. The involved in FAM8A1 interaction stretch occupies residues Met1–Ala251. The chain crosses the membrane as a helical span at residues Ala5 to Leu25. The interval His21 to Ser42 is interaction with SEL1L. Residues Lys26 to Pro41 lie on the Lumenal side of the membrane. Residues Ser42–Gly62 form a helical membrane-spanning segment. At Lys63–Asp98 the chain is on the cytoplasmic side. A helical transmembrane segment spans residues Phe99–Leu119. At Ala120–Arg140 the chain is on the lumenal side. The helical transmembrane segment at Ile141–His161 threads the bilayer. The Cytoplasmic segment spans residues Ser162–Ser169. A helical transmembrane segment spans residues Val170–Ile190. At Lys191–Val224 the chain is on the lumenal side. A helical transmembrane segment spans residues Leu225–Ile245. The interval Lys236–Arg270 is interaction with p53/TP53. Residues Arg246 to His612 are Cytoplasmic-facing. Zn(2+) is bound by residues Cys291, Cys294, Cys307, His309, His312, Cys315, Cys326, and Cys329. The RING-type; atypical zinc-finger motif lies at Cys291–Arg330. 2 disordered regions span residues Ser337–Pro375 and Pro393–Pro449. 2 stretches are compositionally biased toward pro residues: residues Gln341–Pro375 and Pro393–Thr409. Positions Pro416 to Pro434 are enriched in low complexity. Residues Gly435–Pro449 show a composition bias toward pro residues. Positions Gly474–Arg529 are HAF-H domain; necessary to form higher-order Hrd1 complexes. The segment at Pro530–His612 is disordered. Over residues Glu539–Pro559 the composition is skewed to low complexity. Residues Thr560–Pro570 are compositionally biased toward pro residues. Acidic residues predominate over residues Glu586–Ala595. Ser608 is subject to Phosphoserine.

Belongs to the HRD1 family. In terms of assembly, homodimer. Interacts with p53/TP53. Interacts with HTT. Component of the HRD1 complex, which comprises at least SYNV1/HRD1, DERL1/2, FAM8A1, HERPUD1/HERP, OS9, SEL1L and UBE2J1. FAM8A1 is stabilized by interaction with SYNV1, which prevents its proteasomal degradation. OS9 and UBE2J1 recruitment to the complex may be mediated by SEL1L. SYNV1 assembles with SEL1L and FAM8A1 through its transmembrane domains, but interaction with its cytoplasmic domain is required to confer stability to FAM8A1 and enhance recruitment of HERPUD1. The HRD1 complex also associates with VIMP and may transfer misfolded proteins from the endoplasmic reticulum to VCP. May form a complex with ERLEC1; HSPA5; OS9 and SEL1L. Interacts with VCP. Interacts with UBXN6. Interacts with BAG6. Interacts with NFE2L1. Interacts (via N-terminus) with components of the pre-B cell receptor, including IGLL1 and VPREB1A. Interacts with CREB3L3; this interaction leads to CREB3L3 ubiquitination and proteasomal degradation. Post-translationally, auto-ubiquitinated. Deubiquitinated by USP19. In terms of tissue distribution, widely expressed, with highest levels in bone, spleen, lung and testis. In the brain, present in neurons but not in glial cells. Up-regulated in synovial tissues from mice with collagen-induced arthritis (at protein level). Expressed in the liver.

Its subcellular location is the endoplasmic reticulum membrane. The enzyme catalyses S-ubiquitinyl-[E2 ubiquitin-conjugating enzyme]-L-cysteine + [acceptor protein]-L-lysine = [E2 ubiquitin-conjugating enzyme]-L-cysteine + N(6)-ubiquitinyl-[acceptor protein]-L-lysine.. The protein operates within protein modification; protein ubiquitination. In terms of biological role, E3 ubiquitin-protein ligase which accepts ubiquitin specifically from endoplasmic reticulum-associated UBC7 E2 ligase and transfers it to substrates, promoting their degradation. Component of the endoplasmic reticulum quality control (ERQC) system also called ER-associated degradation (ERAD) involved in ubiquitin-dependent degradation of misfolded endoplasmic reticulum proteins. Also promotes the degradation of normal but naturally short-lived proteins such as SGK. Protects cells from ER stress-induced apoptosis. Sequesters p53/TP53 in the cytoplasm and promotes its degradation, thereby negatively regulating its biological function in transcription, cell cycle regulation and apoptosis. Required for embryogenesis. Mediates the ubiquitination and subsequent degradation of cytoplasmic NFE2L1. During the early stage of B cell development, required for degradation of the pre-B cell receptor (pre-BCR) complex, hence supporting further differentiation into mature B cells. This is E3 ubiquitin-protein ligase synoviolin (Syvn1) from Mus musculus (Mouse).